The sequence spans 300 residues: uncharacterized protein (300 aa).

3 Solcar repeats span residues 10 to 101, 119 to 199, and 212 to 294; these read ESQT…VKDF, GKAI…AKEY, and FQNF…LIPF. 6 helical membrane-spanning segments follow: residues 16 to 36, 70 to 86, 121 to 141, 178 to 198, 215 to 235, and 275 to 295; these read IVGS…VDTI, ATSL…YKIV, AIMH…LLPL, TAAR…FAKE, FFTS…LDVI, and LTTG…IPFF.

The protein belongs to the mitochondrial carrier (TC 2.A.29) family.

The protein localises to the mitochondrion inner membrane. This is an uncharacterized protein from Schizosaccharomyces pombe (strain 972 / ATCC 24843) (Fission yeast).